We begin with the raw amino-acid sequence, 152 residues long: MAIWVDADACPNVIKEILFRAAERTQIPVTLVANQPLRVPPSRFIRTLRVEQGFDVADNEIVRQCAAGDLVITADIPLAAEVLAKGGAALNPRGERYSEATIRERLTMRDFMETLRASGVQTGGPDSLSQRDRQQFAAELEKWLLAVKRQQG.

Belongs to the UPF0178 family.

The chain is UPF0178 protein KPK_4355 from Klebsiella pneumoniae (strain 342).